A 699-amino-acid chain; its full sequence is Tectonic-like complex member Mks1 (699 aa).

2 disordered regions span residues 101 to 121 (RRSP…EGEI) and 373 to 396 (DGFS…IEED). Positions 108-119 (HEGEMEKDKNEG) are enriched in basic and acidic residues. Positions 434–560 (KRVSLLLELQ…RLQCIRPLGN (127 aa)) constitute a C2 B9-type domain. The interval 632 to 661 (LELGNDSSDDGDSNDDDVRSSSNPDTSRAT) is disordered.

As to quaternary structure, probable component of the tectonic-like complex (also named MKS complex), composed of B9d1, B9d2, Cc2d2a, Mks1 and tctn. Expressed in chordotonal neurons in the antennae (at protein level). Expressed in spermatids (at protein level).

Its subcellular location is the cytoplasm. The protein localises to the cytoskeleton. The protein resides in the cilium basal body. It localises to the microtubule organizing center. It is found in the centrosome. Its subcellular location is the centriole. Functionally, probable component of the tectonic-like complex (also named MKS complex), a complex localized at the transition zone of primary cilia. Required for ciliary structure and function. The chain is Tectonic-like complex member Mks1 from Drosophila melanogaster (Fruit fly).